A 38-amino-acid polypeptide reads, in one-letter code: Defensin (38 aa).

3 cysteine pairs are disulfide-bonded: Cys4–Cys26, Cys11–Cys34, and Cys15–Cys36.

The protein belongs to the invertebrate defensin family. Type 2 subfamily.

The protein localises to the secreted. Mediates the inducible antibacterial activity in larvae of A.cyanea. This Aeshna cyanea (Southern hawker dragonfly) protein is Defensin.